The sequence spans 876 residues: Leucine--tRNA ligase (876 aa).

The tract at residues 1–20 is disordered; that stretch reads MATERYNPRDAEPRWQQKWN. The short motif at 43–53 is the 'HIGH' region element; the sequence is PYPSGRIHMGH. The short motif at 632–636 is the 'KMSKS' region element; the sequence is KMSKS. Lys-635 provides a ligand contact to ATP.

The protein belongs to the class-I aminoacyl-tRNA synthetase family.

The protein resides in the cytoplasm. It carries out the reaction tRNA(Leu) + L-leucine + ATP = L-leucyl-tRNA(Leu) + AMP + diphosphate. This Rhizobium leguminosarum bv. trifolii (strain WSM2304) protein is Leucine--tRNA ligase.